The sequence spans 512 residues: MCEEGETYCPEVKDAKQGKSLGKICMKCKESSAALLIRAGDAFCKSCFKEYFVHKFRATLGKNRVIYPGEKVLLAYSGGPSSSAMVRQVQEGLSRDAPKKLRFVPGILFIDEGTACGMSWEERQQILSEICSVLQQTKIPFHIVSLEQVFSLPGSVLQRGAPEQRPNYKEEVDRFLVQEREQGDAGCSEMLERLEVTDSDSPGSSDKMYQSTCSHPPDMHTQKLKQLFASAKTLTAKQQLLHTLRSHLILHIARTCGYSKVMTGESCTRLSIRLLSNVSLGRGAFLPLDTGFCDSRYGDVDIIRPMREYSSKEIAYYNRFFNVSPIFIPALDTKASENSSIQHLTEVFVNRLQADFPSTVSTLYRTSEKLNVSKIDADQETCAKDRCLLCLSPLDTQAGKASAFSATQLSHHLSQKIPMKSNDLANNSDKSCCQGGQGCKEAGYGDTCQSRALQTPSFVHMLCYSCRLTVKDMQSLDVLPQYVLHEAEHRCHRTEMRKEIQEFLLDEDDGDS.

It belongs to the CTU2/NCS2 family.

It is found in the cytoplasm. It functions in the pathway tRNA modification; 5-methoxycarbonylmethyl-2-thiouridine-tRNA biosynthesis. Plays a central role in 2-thiolation of mcm(5)S(2)U at tRNA wobble positions of tRNA(Lys), tRNA(Glu) and tRNA(Gln). May act by forming a heterodimer with ctu1/atpbd3 that ligates sulfur from thiocarboxylated urm1 onto the uridine of tRNAs at wobble position. This Xenopus laevis (African clawed frog) protein is Cytoplasmic tRNA 2-thiolation protein 2-A (ctu2-a).